The sequence spans 311 residues: Glycine--tRNA ligase alpha subunit (311 aa).

The protein belongs to the class-II aminoacyl-tRNA synthetase family. As to quaternary structure, tetramer of two alpha and two beta subunits.

The protein localises to the cytoplasm. The catalysed reaction is tRNA(Gly) + glycine + ATP = glycyl-tRNA(Gly) + AMP + diphosphate. This is Glycine--tRNA ligase alpha subunit from Rhizobium meliloti (strain 1021) (Ensifer meliloti).